Consider the following 83-residue polypeptide: Weak toxin DE-1 (83 aa).

The N-terminal stretch at 1 to 21 is a signal peptide; that stretch reads MKTLLLTLVVVTIVCLDLGYS. Intrachain disulfides connect C24-C45, C38-C62, C64-C75, and C76-C81.

The protein belongs to the three-finger toxin family. Short-chain subfamily. Type I alpha-neurotoxin sub-subfamily. In terms of tissue distribution, expressed by the venom gland.

It is found in the secreted. In Ophiophagus hannah (King cobra), this protein is Weak toxin DE-1.